Here is a 106-residue protein sequence, read N- to C-terminus: Nucleoid-associated protein Nham_0463 (106 aa).

Belongs to the YbaB/EbfC family. As to quaternary structure, homodimer.

The protein resides in the cytoplasm. It is found in the nucleoid. Functionally, binds to DNA and alters its conformation. May be involved in regulation of gene expression, nucleoid organization and DNA protection. In Nitrobacter hamburgensis (strain DSM 10229 / NCIMB 13809 / X14), this protein is Nucleoid-associated protein Nham_0463.